The following is a 229-amino-acid chain: 2-C-methyl-D-erythritol 4-phosphate cytidylyltransferase (229 aa).

The protein belongs to the IspD/TarI cytidylyltransferase family. IspD subfamily.

It catalyses the reaction 2-C-methyl-D-erythritol 4-phosphate + CTP + H(+) = 4-CDP-2-C-methyl-D-erythritol + diphosphate. It functions in the pathway isoprenoid biosynthesis; isopentenyl diphosphate biosynthesis via DXP pathway; isopentenyl diphosphate from 1-deoxy-D-xylulose 5-phosphate: step 2/6. In terms of biological role, catalyzes the formation of 4-diphosphocytidyl-2-C-methyl-D-erythritol from CTP and 2-C-methyl-D-erythritol 4-phosphate (MEP). The protein is 2-C-methyl-D-erythritol 4-phosphate cytidylyltransferase of Clostridium botulinum (strain Langeland / NCTC 10281 / Type F).